The sequence spans 965 residues: Valine--tRNA ligase (965 aa).

Positions 1 to 22 (MENTPSHINKTEPSLDKTYSPQ) are disordered. Positions 56–66 (PNVTGSLHMGH) match the 'HIGH' region motif. The short motif at 568–572 (KMSKS) is the 'KMSKS' region element. Residue Lys571 participates in ATP binding. Residues 896 to 965 (LIDKATELDR…IEQQATIAAL (70 aa)) are a coiled coil.

This sequence belongs to the class-I aminoacyl-tRNA synthetase family. ValS type 1 subfamily. Monomer.

Its subcellular location is the cytoplasm. The enzyme catalyses tRNA(Val) + L-valine + ATP = L-valyl-tRNA(Val) + AMP + diphosphate. In terms of biological role, catalyzes the attachment of valine to tRNA(Val). As ValRS can inadvertently accommodate and process structurally similar amino acids such as threonine, to avoid such errors, it has a 'posttransfer' editing activity that hydrolyzes mischarged Thr-tRNA(Val) in a tRNA-dependent manner. The polypeptide is Valine--tRNA ligase (Yersinia pestis).